We begin with the raw amino-acid sequence, 126 residues long: Large-conductance mechanosensitive channel (126 aa).

The next 2 helical transmembrane spans lie at 8 to 28 (FAMRGNVIDLAVAVVLGAAFT) and 70 to 90 (IQQIVSFFLIAIALFLIVKVI).

It belongs to the MscL family. As to quaternary structure, homopentamer.

It localises to the cell membrane. Channel that opens in response to stretch forces in the membrane lipid bilayer. May participate in the regulation of osmotic pressure changes within the cell. The polypeptide is Large-conductance mechanosensitive channel (Exiguobacterium sp. (strain ATCC BAA-1283 / AT1b)).